Reading from the N-terminus, the 208-residue chain is Protein GrpE (208 aa).

Over residues 1-25 (MVDNKDFNEELKESIQEELDNETKS) the composition is skewed to basic and acidic residues. The disordered stretch occupies residues 1–38 (MVDNKDFNEELKESIQEELDNETKSENPNIDEEVEEVS). The span at 29–38 (NIDEEVEEVS) shows a compositional bias: acidic residues.

Belongs to the GrpE family. Homodimer.

Its subcellular location is the cytoplasm. Functionally, participates actively in the response to hyperosmotic and heat shock by preventing the aggregation of stress-denatured proteins, in association with DnaK and GrpE. It is the nucleotide exchange factor for DnaK and may function as a thermosensor. Unfolded proteins bind initially to DnaJ; upon interaction with the DnaJ-bound protein, DnaK hydrolyzes its bound ATP, resulting in the formation of a stable complex. GrpE releases ADP from DnaK; ATP binding to DnaK triggers the release of the substrate protein, thus completing the reaction cycle. Several rounds of ATP-dependent interactions between DnaJ, DnaK and GrpE are required for fully efficient folding. This is Protein GrpE from Clostridium perfringens (strain SM101 / Type A).